The chain runs to 281 residues: MHKARLRGHCARAGKSVRLASSGMTRRDPLTNKVALVTASTDWIGFAVAQRLAQDGAHVVVSRRKQQNVDQAVATLQGEGLSMTGTVCHVGKMKDWERLVATAMKLHGVIDILSLSITNSKRGLFWFTLLQTAEEAWDRNLDINGKALALMIKAVVPEMEKRGGGSVGFLASVAAFRPLPGFSPYNVSKTALLGLNKTLAIELAPRNIRVNCLAPGLIKTSFSRMLWMDKEKEESMKETLRIRRLGEPEDSLGIVSFLCSEDASYLTGETVMVGGGTPSRL.

An NADP(+)-binding site is contributed by 36–60; sequence LVTASTDWIGFAVAQRLAQDGAHVV. S172 is a binding site for substrate. The active-site Proton acceptor is Y185. K189 serves as a coordination point for NADP(+). Residues 279–281 carry the Peroxisomal targeting signal motif; that stretch reads SRL.

This sequence belongs to the short-chain dehydrogenases/reductases (SDR) family.

Functionally, putative oxidoreductase. The chain is Putative dehydrogenase/reductase SDR family member 4-like 1 from Homo sapiens (Human).